Reading from the N-terminus, the 353-residue chain is A-kinase anchor protein 7 isoforms delta and gamma (353 aa).

Basic and acidic residues-rich tracts occupy residues 1–22 (MERPAAGEIDANKCDHLSRGEE) and 66–76 (RSKENRGDRND). Disordered regions lie at residues 1–33 (MERPAAGEIDANKCDHLSRGEEGTGDLETSPVG) and 47–85 (DDCGLPDVPQGNVPQGNPKRSKENRGDRNDHVKKRKKAK). AMP-binding positions include threonine 134 and 224–226 (HLT). CMP is bound by residues threonine 134 and 224–226 (HLT). Residues 299–353 (AELVRLSKRLVENAVLKAVQQYLEETQNKKQPGEGNSVKAEEGDRNGDGSDNNRK) form a PKA-RII-alpha subunit binding domain region. An RI-alpha-binding region spans residues 300-324 (ELVRLSKRLVENAVLKAVQQYLEET). Residues 301–314 (LVRLSKRLVENAVL) form an RII-binding region. The interval 321-353 (LEETQNKKQPGEGNSVKAEEGDRNGDGSDNNRK) is disordered. Positions 337 to 353 (KAEEGDRNGDGSDNNRK) are enriched in basic and acidic residues.

Binds cAMP-dependent protein kinase (PKA). Interacts with PRKCA; only the cytoplasmic form is capable of interacting with PRKCA. Expressed highly in the heart, and moderately in brain, lung, liver, kidney and testis. Hardly detectable in spleen and skeletal muscle. In kidney, isoform Delta is expressed in the principal cells of the IMCD.

Its subcellular location is the nucleus. It localises to the cytoplasm. It is found in the cell membrane. Probably targets cAMP-dependent protein kinase (PKA) to the cellular membrane or cytoskeletal structures. The membrane-associated form reduces epithelial sodium channel (ENaC) activity, whereas the free cytoplasmic form may negatively regulate ENaC channel feedback inhibition by intracellular sodium. Isoform Delta may be involved in shuttling aquaporin-2 (AQP2) to the plasma membrane. The chain is A-kinase anchor protein 7 isoforms delta and gamma from Rattus norvegicus (Rat).